A 263-amino-acid polypeptide reads, in one-letter code: Ribonuclease HII (263 aa).

Positions 74–262 (EHVAGLDEVG…VQETAATRQT (189 aa)) constitute an RNase H type-2 domain. Asp80, Glu81, and Asp172 together coordinate a divalent metal cation.

The protein belongs to the RNase HII family. Mn(2+) is required as a cofactor. The cofactor is Mg(2+).

The protein localises to the cytoplasm. It carries out the reaction Endonucleolytic cleavage to 5'-phosphomonoester.. Its function is as follows. Endonuclease that specifically degrades the RNA of RNA-DNA hybrids. The protein is Ribonuclease HII (rnhB) of Halalkalibacterium halodurans (strain ATCC BAA-125 / DSM 18197 / FERM 7344 / JCM 9153 / C-125) (Bacillus halodurans).